A 195-amino-acid chain; its full sequence is Apoptosis-associated speck-like protein containing a CARD (195 aa).

The Pyrin domain maps to 1–91 (MGCTRDAILD…AEQLQETMSK (91 aa)). Residues Lys55 and Lys174 each participate in a glycyl lysine isopeptide (Lys-Gly) (interchain with G-Cter in ubiquitin) cross-link. Positions 107-195 (TAKPGLHFVD…PYLVDDLEQS (89 aa)) constitute a CARD domain. A Phosphoserine modification is found at Ser195.

In terms of assembly, self-associates; enforced oligomerization induces apoptosis, NF-kappa-B regulation and interleukin-1 beta secretion. Homooligomers can form disk-like particles of approximately 12 nm diameter and approximately 1 nm height. Component of several inflammasomes containing one pattern recognition receptor/sensor, such as NLRP1, NLRP2, NLRP3, NLRP6, NLRC4, AIM2, MEFV or NOD2, and probably NLRC4 or NLRP12. Major component of the ASC pyroptosome, a 1-2 um supramolecular assembly (one per macrophage cell) which consists of oligomerized PYCARD dimers and CASP1. Interacts with CASP1 (precursor form); the interaction induces activation of CASP1 leading to the processing of interleukin-1 beta; PYCARD competes with RIPK2 for binding to CASP1. Interacts with NLRP3; the interaction requires the homooligomerization of NLRP3. Interacts with NLRP2, NLRC4, MEFV, CARD16, AIM2, NOD2, RIGI, RIPK2, PYDC1, PYDC2, NLRP10, CASP8, CHUK, IKBKB and BAX. Component of the AIM2 PANoptosome complex, a multiprotein complex that drives inflammatory cell death (PANoptosis). Phosphorylated. In terms of processing, 'Lys-63'-linked polyubiquitination by TRAF3 is critical for speck formation and inflammasome activation. 'Lys-63'-linked deubiquitinated by USP50; a crucial step for NLRP3-mediated inflammasome activation. 'Lys-63'-linked polyubiquitination by PELI1 is also critical for speck formation and inflammasome activation. Deubiquitinated by USP3 that cleaves 'Lys-48'-linked ubiquitin chains and strengthens its stability by blocking proteasomal degradation.

It is found in the cytoplasm. The protein localises to the inflammasome. The protein resides in the endoplasmic reticulum. Its subcellular location is the mitochondrion. It localises to the nucleus. Functions as a key mediator in apoptosis and inflammation. Promotes caspase-mediated apoptosis involving predominantly caspase-8 and also caspase-9 in a probable cell type-specific manner. Involved in activation of the mitochondrial apoptotic pathway, promotes caspase-8-dependent proteolytic maturation of BID independently of FADD in certain cell types and also mediates mitochondrial translocation of BAX and activates BAX-dependent apoptosis coupled to activation of caspase-9, -2 and -3. Involved in innate immune response by acting as an integral adapter in the assembly of various inflammasomes (NLRP2, NLRP3, NLRP6 and AIM2) which recruit and activate caspase-1 leading to processing and secretion of pro-inflammatory cytokines. Caspase-1-dependent inflammation leads to macrophage pyroptosis, a form of cell death. The function as activating adapter in different types of inflammasomes is mediated by the pyrin and CARD domains and their homotypic interactions. Clustered PYCARD nucleates the formation of caspase-1 filaments through the interaction of their respective CARD domains, acting as a platform for of caspase-1 polymerization. In the NLRC4 inflammasomes seems not be required but facilitates the processing of procaspase-1. In cooperation with NOD2 involved in an inflammasome activated by bacterial muramyl dipeptide leading to caspase-1 activation. May be involved in RIGI-triggered pro-inflammatory responses and inflammasome activation. In collaboration with AIM2 which detects cytosolic double-stranded DNA may also be involved in a caspase-1-independent cell death that involves caspase-8. In adaptive immunity may be involved in maturation of dendritic cells to stimulate T-cell immunity and in cytoskeletal rearrangements coupled to chemotaxis and antigen uptake may be involved in post-transcriptional regulation of the guanine nucleotide exchange factor DOCK2; the latter function is proposed to involve the nuclear form. Also involved in transcriptional activation of cytokines and chemokines independent of the inflammasome; this function may involve AP-1, NF-kappa-B, MAPK and caspase-8 signaling pathways. For regulation of NF-kappa-B activating and inhibiting functions have been reported. Modulates NF-kappa-B induction at the level of the IKK complex by inhibiting kinase activity of CHUK and IKBK. Proposed to compete with RIPK2 for association with CASP1 thereby down-regulating CASP1-mediated RIPK2-dependent NF-kappa-B activation and activating interleukin-1 beta processing. Modulates host resistance to DNA virus infection, probably by inducing the cleavage of and inactivating CGAS in presence of cytoplasmic double-stranded DNA. The protein is Apoptosis-associated speck-like protein containing a CARD (PYCARD) of Bos taurus (Bovine).